We begin with the raw amino-acid sequence, 85 residues long: Large ribosomal subunit protein bL27 (85 aa).

The segment at 1 to 22 is disordered; it reads MAHKKAGGSTNNGRDSESKRLG.

The protein belongs to the bacterial ribosomal protein bL27 family.

The polypeptide is Large ribosomal subunit protein bL27 (Photobacterium profundum (strain SS9)).